We begin with the raw amino-acid sequence, 86 residues long: MMGKGFEMMVASAIRAAGINPDELMEKANTLVHNLNYQLDRFGQRLDSIDSRLSVIEKALDISPAEKPDNQPELTGITFEGDNNDQ.

The disordered stretch occupies residues 63–86 (SPAEKPDNQPELTGITFEGDNNDQ).

As to quaternary structure, homotetramer.

Functionally, assembly protein that acts late in phage assembly, after capsid protein folding and multimerization, and sorting of membrane proteins has occurred. The major coat protein P3 and two assembly factors (P10 and P17) are needed during the assembly of the virus particle inside the host cell, when the capsid protein multimers are capable of enclosing the host-derived membrane, containing the virus-encoded membrane-associated proteins. This chain is Protein P17 (XVII), found in Enterobacteria phage PRD1 (Bacteriophage PRD1).